The following is a 261-amino-acid chain: Single-strand annealing weakened protein 1 (261 aa).

As to quaternary structure, interacts with MSH2, MSH3, RAD1, RAD10, RAD51 and RAD52.

The protein resides in the nucleus. Its function is as follows. Catalyzes 3'-non-homologous tail removal of RAD1/RAD10-dependent single-strand annealing recombination intermediates. Plays a key role in targeting RAD1/RAD10 complex to 3'-flap cleavage substrate in recombination. Also contributes to the integrity of ribosomal DNA arrays. This Saccharomyces cerevisiae (strain ATCC 204508 / S288c) (Baker's yeast) protein is Single-strand annealing weakened protein 1 (SAW1).